We begin with the raw amino-acid sequence, 326 residues long: Vitamin B12 import system permease protein BtuC (326 aa).

9 helical membrane passes run 15-35 (WLLCLSVLMLLALLLSLCAGE), 61-81 (LAVLLVGAALAISGAVMQALF), 88-108 (PGLLGVSNGAGVGLIAAVLLG), 112-132 (LPNWALGLCAIAGALIITLIL), 146-166 (LLAGVALGIICSALMTWAIYF), 184-204 (GGVDWRQSWLMLALIPVLLWI), 240-260 (GWMVGVSVALAGAIGFIGLVI), 274-294 (VLLPGCALAGASAVLLADIVA), and 302-322 (ELPIGVVTATLGAPVFIWLLL).

This sequence belongs to the binding-protein-dependent transport system permease family. FecCD subfamily. As to quaternary structure, the complex is composed of two ATP-binding proteins (BtuD), two transmembrane proteins (BtuC) and a solute-binding protein (BtuF).

Its subcellular location is the cell inner membrane. In terms of biological role, part of the ABC transporter complex BtuCDF involved in vitamin B12 import. Involved in the translocation of the substrate across the membrane. This is Vitamin B12 import system permease protein BtuC from Shigella sonnei (strain Ss046).